Here is a 215-residue protein sequence, read N- to C-terminus: Adenylate kinase (215 aa).

ATP is bound at residue 10-15 (GAGKGT). The tract at residues 30-59 (STGDIFRKNISENTPLGMEARSYMDKGLLV) is NMP. AMP is bound by residues Thr-31, Arg-36, 57–59 (LLV), 85–88 (GFPR), and Gln-92. The LID stretch occupies residues 126-163 (GRRVCTSCGGSFHIKFNPPTIDGKCNLCGSDIVQRKDD). Position 127 (Arg-127) interacts with ATP. The Zn(2+) site is built by Cys-130 and Cys-133. ATP is bound at residue 136–137 (SF). Zn(2+) contacts are provided by Cys-150 and Cys-153. Residues Arg-160 and Arg-171 each coordinate AMP. Residue Lys-199 coordinates ATP.

Belongs to the adenylate kinase family. Monomer.

Its subcellular location is the cytoplasm. It catalyses the reaction AMP + ATP = 2 ADP. It participates in purine metabolism; AMP biosynthesis via salvage pathway; AMP from ADP: step 1/1. Catalyzes the reversible transfer of the terminal phosphate group between ATP and AMP. Plays an important role in cellular energy homeostasis and in adenine nucleotide metabolism. The protein is Adenylate kinase of Clostridium botulinum (strain Eklund 17B / Type B).